We begin with the raw amino-acid sequence, 266 residues long: GTP cyclohydrolase III (266 aa).

The protein belongs to the archaeal-type GTP cyclohydrolase family.

The enzyme catalyses GTP + 3 H2O = 2-amino-5-formylamino-6-(5-phospho-D-ribosylamino)pyrimidin-4(3H)-one + 2 phosphate + 2 H(+). In terms of biological role, catalyzes the formation of 2-amino-5-formylamino-6-ribofuranosylamino-4(3H)-pyrimidinone ribonucleotide monophosphate and inorganic phosphate from GTP. Also has an independent pyrophosphate phosphohydrolase activity. This chain is GTP cyclohydrolase III, found in Methanococcus maripaludis (strain C7 / ATCC BAA-1331).